The chain runs to 962 residues: Voltage-gated delayed rectifier potassium channel KCNH1 (962 aa).

At 1–220 (MTMAGGRRGL…LHYCVFKTTW (220 aa)) the chain is on the cytoplasmic side. Residues 14–94 (QNTFLENIVR…QTFENYEMNS (81 aa)) enclose the PAS domain. The 53-residue stretch at 93–145 (NSFEILMYKKNRTPVWFFVKIAPIRNEQDKVVLFLCTFSDITAFKQPIEDDSC) folds into the PAC domain. The required for phosphatidylinositol bisphosphate binding stretch occupies residues 151 to 162 (FARLTRALTSSR). A helical membrane pass occupies residues 221–241 (DWIILILTFYTAILVPYNVSF). Residues 242–248 (KTRQNNV) are Extracellular-facing. A helical membrane pass occupies residues 249–269 (AWLVVDSIVDVIFLVDIVLNF). Residues 270 to 290 (HTTFVGPAGEVISDPKLIRMN) lie on the Cytoplasmic side of the membrane. The chain crosses the membrane as a helical span at residues 291 to 309 (YLKTWFVIDLLSCLPYDVI). At 310-318 (NAFENVDEG) the chain is on the extracellular side. The helical; Voltage-sensor transmembrane segment at 319–341 (ISSLFSSLKVVRLLRLGRVARKL) threads the bilayer. The Cytoplasmic portion of the chain corresponds to 342–350 (DHYIEYGAA). The chain crosses the membrane as a helical span at residues 351 to 372 (VLVLLVCVFGLAAHWMACIWYS). Residues 373–421 (IGDYEIFDEDTKTIRNNSWLYQLALDIGTPYQFNGSGSGKWEGGPSKNS) are Extracellular-facing. 2 N-linked (GlcNAc...) asparagine glycosylation sites follow: N388 and N406. An intramembrane region (pore-forming) is located at residues 422-443 (VYISSLYFTMTSLTSVGFGNIA). The Selectivity filter signature appears at 436 to 441 (SVGFGN). Residues 444–450 (PSTDIEK) are Extracellular-facing. Residues 451–471 (IFAVAIMMIGSLLYATIFGNV) traverse the membrane as a helical segment. The Cytoplasmic portion of the chain corresponds to 472 to 962 (TTIFQQMYAN…ESDRDIFGAS (491 aa)). The tract at residues 646–743 (KRDALQKVLE…LDDLDVEKGN (98 aa)) is calmodulin-binding. The tract at residues 672–674 (YNL) is interaction with cyclic nucleotide-binding pocket. Over residues 830–852 (ESMETLPERTKASGEATLKKTDS) the composition is skewed to basic and acidic residues. Disordered regions lie at residues 830 to 859 (ESMETLPERTKASGEATLKKTDSCDSGITK) and 933 to 962 (SRGSSQSPQDTCEVSRPQSPESDRDIFGAS). Residues 897–937 (ATVLEVKHELKEDIKALNAKMTSIEKQLSEILRILMSRGSS) form a CAD (involved in subunit assembly) region. Over residues 934-952 (RGSSQSPQDTCEVSRPQSP) the composition is skewed to polar residues. 3 positions are modified to phosphoserine: S947, S951, and S954. Over residues 953–962 (ESDRDIFGAS) the composition is skewed to basic and acidic residues.

It belongs to the potassium channel family. H (Eag) (TC 1.A.1.20) subfamily. Kv10.1/KCNH1 sub-subfamily. In terms of assembly, homomultimer. The potassium channel is composed of a homo- or heterotetrameric complex of pore-forming alpha subunits that can associate with modulating beta subunits. Heteromultimer with KCNH5/EAG2. Interacts with ALG10B. Interacts with RABEP1. Interacts (via C-terminus) with CTTN. Interacts (via cytoplasmic region) with Ca(2+)-bound calmodulin. Post-translationally, channel activity is regulated via tyrosine phosphorylation/dephosphorylation by SRC and PTPN6. Detected in cerebellum, at parallel fiber synapses on Purkinje cell spines. Detected in hippocampus neurons (at protein level). Detected in brain, but not in the other tissues tested; expression is highest in granular cells of the dentate gyrus, in hippocampus CA3 pyramidal cells, and in cerebellar granule cells. Detected in pituitary.

Its subcellular location is the cell membrane. The protein localises to the nucleus inner membrane. It localises to the cell projection. It is found in the dendrite. The protein resides in the axon. Its subcellular location is the presynaptic cell membrane. The protein localises to the perikaryon. It localises to the postsynaptic density membrane. It is found in the early endosome membrane. The catalysed reaction is K(+)(in) = K(+)(out). With respect to regulation, channel activity is inhibited by interaction with Ca(2+)-bound calmodulin. Interaction of a single pore-forming alpha subunit with a calmodulin chain is sufficient to promote channel closure. Channel activity is not regulated by cyclic nucleotides. Channel activity is inhibited by binding intracellular phosphatidylinositol-3,5-bisphosphate and phosphatidylinositol-4,5-bisphosphate (PIP2), but is not inhibited by phosphatidylinositol 4-phosphate. Pore-forming (alpha) subunit of a voltage-gated delayed rectifier potassium channel that mediates outward-rectifying potassium currents which, on depolarization, reaches a steady-state level and do not inactivate. The activation kinetics depend on the prepulse potential and external divalent cation concentration. With negative prepulses, the current activation is delayed and slowed down several fold, whereas more positive prepulses speed up activation. The time course of activation is biphasic with a fast and a slowly activating current component. Activates at more positive membrane potentials and exhibit a steeper activation curve. Channel properties are modulated by subunit assembly. Mediates IK(NI) current in myoblasts. Involved in the regulation of cell proliferation and differentiation, in particular adipogenic and osteogenic differentiation in bone marrow-derived mesenchymal stem cells (MSCs). In Rattus norvegicus (Rat), this protein is Voltage-gated delayed rectifier potassium channel KCNH1.